Here is a 116-residue protein sequence, read N- to C-terminus: Histone H2B (116 aa).

A compositionally biased stretch (basic residues) spans 1-11 (TSGKAAKKAGK). The segment at 1–25 (TSGKAAKKAGKAQKSITKGDKKKRK) is disordered. Residues lysine 4, lysine 11, and lysine 14 each carry the N6-acetyllysine modification. O-linked (GlcNAc) serine glycosylation is present at serine 103. Lysine 111 is covalently cross-linked (Glycyl lysine isopeptide (Lys-Gly) (interchain with G-Cter in ubiquitin)).

As to quaternary structure, the nucleosome is a histone octamer containing two molecules each of H2A, H2B, H3 and H4 assembled in one H3-H4 heterotetramer and two H2A-H2B heterodimers. The octamer wraps approximately 147 bp of DNA. In terms of processing, monoubiquitination gives a specific tag for epigenetic transcriptional activation and is also prerequisite for histone H3 'Lys-4' and 'Lys-79' methylation. GlcNAcylation at Ser-103 promotes monoubiquitination of Lys-111. It fluctuates in response to extracellular glucose, and associates with transcribed genes.

It is found in the nucleus. The protein resides in the chromosome. Functionally, core component of nucleosome. Nucleosomes wrap and compact DNA into chromatin, limiting DNA accessibility to the cellular machineries which require DNA as a template. Histones thereby play a central role in transcription regulation, DNA repair, DNA replication and chromosomal stability. DNA accessibility is regulated via a complex set of post-translational modifications of histones, also called histone code, and nucleosome remodeling. Its function is as follows. A mixture of histones H2B and H4 has antimicrobial activity against the Gram-positive bacterium M.luteus. The chain is Histone H2B from Penaeus vannamei (Whiteleg shrimp).